The primary structure comprises 292 residues: Elongation factor Ts (292 aa).

An involved in Mg(2+) ion dislocation from EF-Tu region spans residues 79-82 (TDFV).

Belongs to the EF-Ts family.

It is found in the cytoplasm. Its function is as follows. Associates with the EF-Tu.GDP complex and induces the exchange of GDP to GTP. It remains bound to the aminoacyl-tRNA.EF-Tu.GTP complex up to the GTP hydrolysis stage on the ribosome. In Xanthomonas campestris pv. campestris (strain B100), this protein is Elongation factor Ts.